We begin with the raw amino-acid sequence, 227 residues long: Protein FAM3C (227 aa).

Residues 1–30 (MMRAGGLLKLGVLVSVLFVAVFLAFELLES) form the signal peptide. 2 disulfides stabilise this stretch: Cys58–Cys86 and Cys64–Cys221. The GG-type lectin domain maps to 67–225 (DHFAFKITSG…LEMEGCIPIK (159 aa)).

Belongs to the FAM3 family.

Its subcellular location is the secreted. Involved in retinal laminar formation. The sequence is that of Protein FAM3C (fam3c) from Danio rerio (Zebrafish).